Reading from the N-terminus, the 433-residue chain is tRNA(Ile2) 2-agmatinylcytidine synthetase TiaS (433 aa).

The protein belongs to the TiaS family.

The protein localises to the cytoplasm. It carries out the reaction cytidine(34) in tRNA(Ile2) + agmatine + ATP + H2O = 2-agmatinylcytidine(34) in tRNA(Ile2) + AMP + 2 phosphate + 2 H(+). Functionally, ATP-dependent agmatine transferase that catalyzes the formation of 2-agmatinylcytidine (agm2C) at the wobble position (C34) of tRNA(Ile2), converting the codon specificity from AUG to AUA. The sequence is that of tRNA(Ile2) 2-agmatinylcytidine synthetase TiaS from Methanopyrus kandleri (strain AV19 / DSM 6324 / JCM 9639 / NBRC 100938).